The following is a 256-amino-acid chain: Triosephosphate isomerase (256 aa).

12 to 14 (NWK) is a binding site for substrate. Histidine 99 acts as the Electrophile in catalysis. Glutamate 169 serves as the catalytic Proton acceptor. Residues glycine 175, serine 214, and 235–236 (GG) contribute to the substrate site.

It belongs to the triosephosphate isomerase family. Homodimer.

It localises to the cytoplasm. The enzyme catalyses D-glyceraldehyde 3-phosphate = dihydroxyacetone phosphate. It participates in carbohydrate biosynthesis; gluconeogenesis. Its pathway is carbohydrate degradation; glycolysis; D-glyceraldehyde 3-phosphate from glycerone phosphate: step 1/1. Its function is as follows. Involved in the gluconeogenesis. Catalyzes stereospecifically the conversion of dihydroxyacetone phosphate (DHAP) to D-glyceraldehyde-3-phosphate (G3P). The sequence is that of Triosephosphate isomerase from Rhizobium etli (strain ATCC 51251 / DSM 11541 / JCM 21823 / NBRC 15573 / CFN 42).